Consider the following 205-residue polypeptide: Holliday junction branch migration complex subunit RuvA (205 aa).

Positions 1–64 (MIGRLRGVLI…EDAQLLYGFI (64 aa)) are domain I. The tract at residues 65–143 (TKQERSLFRL…SLMEASVGSE (79 aa)) is domain II. The tract at residues 144-156 (REFVLQSNYSPAP) is flexible linker. The domain III stretch occupies residues 157-205 (TVNSAEEDAISALISLGYKPPQASKAVSAAYKEGMDSETLIKAALKSML).

Belongs to the RuvA family. As to quaternary structure, homotetramer. Forms an RuvA(8)-RuvB(12)-Holliday junction (HJ) complex. HJ DNA is sandwiched between 2 RuvA tetramers; dsDNA enters through RuvA and exits via RuvB. An RuvB hexamer assembles on each DNA strand where it exits the tetramer. Each RuvB hexamer is contacted by two RuvA subunits (via domain III) on 2 adjacent RuvB subunits; this complex drives branch migration. In the full resolvosome a probable DNA-RuvA(4)-RuvB(12)-RuvC(2) complex forms which resolves the HJ.

The protein localises to the cytoplasm. Functionally, the RuvA-RuvB-RuvC complex processes Holliday junction (HJ) DNA during genetic recombination and DNA repair, while the RuvA-RuvB complex plays an important role in the rescue of blocked DNA replication forks via replication fork reversal (RFR). RuvA specifically binds to HJ cruciform DNA, conferring on it an open structure. The RuvB hexamer acts as an ATP-dependent pump, pulling dsDNA into and through the RuvAB complex. HJ branch migration allows RuvC to scan DNA until it finds its consensus sequence, where it cleaves and resolves the cruciform DNA. The polypeptide is Holliday junction branch migration complex subunit RuvA (Shewanella sp. (strain MR-7)).